Here is a 339-residue protein sequence, read N- to C-terminus: tRNA N6-adenosine threonylcarbamoyltransferase (339 aa).

Residues H114 and H118 each contribute to the Fe cation site. Residues 137 to 141 (VVSGG), D170, G183, D187, and N277 contribute to the substrate site. Residue D305 coordinates Fe cation.

The protein belongs to the KAE1 / TsaD family. The cofactor is Fe(2+).

The protein resides in the cytoplasm. It catalyses the reaction L-threonylcarbamoyladenylate + adenosine(37) in tRNA = N(6)-L-threonylcarbamoyladenosine(37) in tRNA + AMP + H(+). In terms of biological role, required for the formation of a threonylcarbamoyl group on adenosine at position 37 (t(6)A37) in tRNAs that read codons beginning with adenine. Is involved in the transfer of the threonylcarbamoyl moiety of threonylcarbamoyl-AMP (TC-AMP) to the N6 group of A37, together with TsaE and TsaB. TsaD likely plays a direct catalytic role in this reaction. This is tRNA N6-adenosine threonylcarbamoyltransferase from Clostridium beijerinckii (strain ATCC 51743 / NCIMB 8052) (Clostridium acetobutylicum).